A 58-amino-acid chain; its full sequence is Metallothionein-2B (58 aa).

The interval 1–29 is beta; the sequence is MPDPCCNDKCECKEGECKTGCKCKSCRCP. Residues C5, C6, C10, C12, C17, C21, C23, C26, C28, C31, C34, C38, C40, C46, C50, C54, C56, and C57 each coordinate a divalent metal cation. The segment at 30-58 is alpha; sequence PCDKCSSECKCTSKEECSKTCSKPCSCCP.

This sequence belongs to the metallothionein superfamily. Type 3 family.

Functionally, binds six divalent metal ions. Known to bind copper and cadmium. In Callinectes sapidus (Blue crab), this protein is Metallothionein-2B.